A 200-amino-acid chain; its full sequence is Dual specificity tyrosine-phosphorylation-regulated kinase 1A (200 aa).

Tyr-41 carries the post-translational modification Phosphotyrosine; by autocatalysis. Lys-58 contributes to the ATP binding site. Tyr-76 is subject to Phosphotyrosine; by autocatalysis. Phosphoserine; by autocatalysis is present on Ser-88. Thr-122 is subject to Phosphothreonine; by autocatalysis.

This sequence belongs to the protein kinase superfamily. CMGC Ser/Thr protein kinase family. MNB/DYRK subfamily. In terms of assembly, interacts with RAD54L2/ARIP4. Interacts with CRY2. Interacts with RANBP9. Interacts with WDR68. Interacts with SIRT1. In terms of processing, can also autophosphorylate on serine and threonine residues (in vitro). Autophosphorylated on numerous tyrosine residues.

The protein resides in the nucleus. It carries out the reaction L-tyrosyl-[protein] + ATP = O-phospho-L-tyrosyl-[protein] + ADP + H(+). The catalysed reaction is L-seryl-[protein] + ATP = O-phospho-L-seryl-[protein] + ADP + H(+). The enzyme catalyses L-threonyl-[protein] + ATP = O-phospho-L-threonyl-[protein] + ADP + H(+). It catalyses the reaction [DNA-directed RNA polymerase] + ATP = phospho-[DNA-directed RNA polymerase] + ADP + H(+). Inhibited by RANBP9. Dual-specificity kinase which possesses both serine/threonine and tyrosine kinase activities. Exhibits a substrate preference for proline at position P+1 and arginine at position P-3. Plays an important role in double-strand breaks (DSBs) repair following DNA damage. Mechanistically, phosphorylates RNF169 and increases its ability to block accumulation of TP53BP1 at the DSB sites thereby promoting homologous recombination repair (HRR). Also acts as a positive regulator of transcription by acting as a CTD kinase that mediates phosphorylation of the CTD (C-terminal domain) of the large subunit of RNA polymerase II (RNAP II) POLR2A. May play a role in a signaling pathway regulating nuclear functions of cell proliferation. Modulates alternative splicing by phosphorylating the splice factor SRSF6. Has pro-survival function and negatively regulates the apoptotic process. Promotes cell survival upon genotoxic stress through phosphorylation of SIRT1. This in turn inhibits p53/TP53 activity and apoptosis. Phosphorylates SEPTIN4, SEPTIN5 and SF3B1 at 'Thr-434'. This is Dual specificity tyrosine-phosphorylation-regulated kinase 1A from Oryctolagus cuniculus (Rabbit).